Here is a 98-residue protein sequence, read N- to C-terminus: uncharacterized protein (98 aa).

This is an uncharacterized protein from Enterobacteria phage T4 (Bacteriophage T4).